An 88-amino-acid polypeptide reads, in one-letter code: Small ribosomal subunit protein bS20 (88 aa).

Over residues 1–22 (MANIKSSKKRSIQSEKKRKYNS) the composition is skewed to basic residues. The tract at residues 1–26 (MANIKSSKKRSIQSEKKRKYNSSKKS) is disordered.

Belongs to the bacterial ribosomal protein bS20 family.

In terms of biological role, binds directly to 16S ribosomal RNA. This Wigglesworthia glossinidia brevipalpis protein is Small ribosomal subunit protein bS20.